The following is a 141-amino-acid chain: Nucleoside diphosphate kinase (141 aa).

The ATP site is built by K11, F59, R87, T93, R104, and N114. Catalysis depends on H117, which acts as the Pros-phosphohistidine intermediate.

The protein belongs to the NDK family. In terms of assembly, homotetramer. Mg(2+) serves as cofactor.

It localises to the cytoplasm. The enzyme catalyses a 2'-deoxyribonucleoside 5'-diphosphate + ATP = a 2'-deoxyribonucleoside 5'-triphosphate + ADP. The catalysed reaction is a ribonucleoside 5'-diphosphate + ATP = a ribonucleoside 5'-triphosphate + ADP. In terms of biological role, major role in the synthesis of nucleoside triphosphates other than ATP. The ATP gamma phosphate is transferred to the NDP beta phosphate via a ping-pong mechanism, using a phosphorylated active-site intermediate. The chain is Nucleoside diphosphate kinase from Neisseria meningitidis serogroup A / serotype 4A (strain DSM 15465 / Z2491).